Consider the following 351-residue polypeptide: Keratocan (351 aa).

The first 20 residues, 1 to 20, serve as a signal peptide directing secretion; that stretch reads MATPNCLILWVLLIADTVWT. One can recognise an LRRNT domain in the interval 34–72; the sequence is DWDVHDDFYCPRECFCPPSFPTALYCENRGLTEIPPIPS. Intrachain disulfides connect cysteine 43–cysteine 49 and cysteine 47–cysteine 59. LRR repeat units follow at residues 73-94, 97-118, 123-143, 144-165, 168-181, 194-214, 215-236, 239-259, 264-283, and 284-305; these read RIWYLYLENNLIESIPEKPFEN, QLRWINLNKNKITNYGIEKGAL, KLLFLFLEDNELEEVPSPLPR, SLEQLQLARNKVSRIPQGTFSN, NLTLLDLQHNKLLD, NLMQLNMAKNALRNMPPRLPA, NTMQLFLDNNSIEGIPENYFNV, KVAFLRLNHNKLSDAGLPSRG, SILDLQLSYNQLTNFPRINA, and NLQHLHLDHNKIKNVNMSVICP. The N-linked (GlcNAc...) (keratan sulfate) asparagine glycan is linked to asparagine 94. Residue asparagine 168 is glycosylated (N-linked (GlcNAc...) (keratan sulfate) asparagine). The N-linked (GlcNAc...) asparagine glycan is linked to asparagine 223. Asparagine 299 carries N-linked (GlcNAc...) asparagine glycosylation. Cysteine 304 and cysteine 342 are joined by a disulfide.

This sequence belongs to the small leucine-rich proteoglycan (SLRP) family. SLRP class II subfamily. In terms of processing, binds keratan sulfate chains. As to expression, selectively expressed in cornea of adult where it is detected in keratocytes but not in scleral cells. In embryo, first detected in periocular mesenchymal cells migrating toward developing cornea on 13.5 dpc; expression gradually restricted to corneal stromal cells on 14.5 to 18.5 dpc. Detected in scleral cells of 15.5 dpc but not in 18.5 dpc embryos.

It localises to the secreted. The protein localises to the extracellular space. It is found in the extracellular matrix. May be important in developing and maintaining corneal transparency and for the structure of the stromal matrix. This is Keratocan (Kera) from Mus musculus (Mouse).